We begin with the raw amino-acid sequence, 411 residues long: Na(+)/H(+) antiporter NhaA 2 (411 aa).

10 consecutive transmembrane segments (helical) span residues 18–38 (VGGS…NSPV), 59–79 (LTVG…VAGL), 97–117 (LLPI…AATI), 127–147 (GWAI…ALTG), 167–187 (LLAI…LWLL), 218–238 (WYCM…LGLL), 261–281 (PLSA…VALS), 297–317 (VIAG…WLAI), 338–358 (VLGA…LAGI), and 366–386 (IAKV…SALL).

It belongs to the NhaA Na(+)/H(+) (TC 2.A.33) antiporter family.

Its subcellular location is the cell membrane. It carries out the reaction Na(+)(in) + 2 H(+)(out) = Na(+)(out) + 2 H(+)(in). Na(+)/H(+) antiporter that extrudes sodium in exchange for external protons. The chain is Na(+)/H(+) antiporter NhaA 2 from Rhodococcus jostii (strain RHA1).